The sequence spans 123 residues: Putative iron-sulfur cluster insertion protein ErpA (123 aa).

Iron-sulfur cluster contacts are provided by cysteine 51, cysteine 115, and cysteine 117.

It belongs to the HesB/IscA family. Homodimer. Iron-sulfur cluster is required as a cofactor.

In terms of biological role, required for insertion of 4Fe-4S clusters. This Burkholderia lata (strain ATCC 17760 / DSM 23089 / LMG 22485 / NCIMB 9086 / R18194 / 383) protein is Putative iron-sulfur cluster insertion protein ErpA.